Reading from the N-terminus, the 166-residue chain is Large ribosomal subunit protein uL10 (166 aa).

This sequence belongs to the universal ribosomal protein uL10 family. As to quaternary structure, part of the ribosomal stalk of the 50S ribosomal subunit. The N-terminus interacts with L11 and the large rRNA to form the base of the stalk. The C-terminus forms an elongated spine to which L12 dimers bind in a sequential fashion forming a multimeric L10(L12)X complex.

Its function is as follows. Forms part of the ribosomal stalk, playing a central role in the interaction of the ribosome with GTP-bound translation factors. The protein is Large ribosomal subunit protein uL10 (rplJ) of Streptococcus pyogenes serotype M1.